The sequence spans 408 residues: Multidrug resistance protein MdtG (408 aa).

Transmembrane regions (helical) follow at residues 16 to 36 (LIVA…VMPF), 58 to 78 (IVFS…GGLA), 92 to 112 (LGMG…QFLI), 115 to 135 (ALLG…ATQV), 146 to 166 (TLST…GLLA), 173 to 193 (PVFF…LFCI), 224 to 244 (LFVT…ILTL), 256 to 276 (VAFI…LSAP), 290 to 310 (ILIT…YVQT), 319 to 339 (FLLG…LVYN), and 378 to 398 (AVFL…WNSL).

The protein belongs to the major facilitator superfamily. DHA1 family. MdtG (TC 2.A.1.2.20) subfamily.

The protein resides in the cell inner membrane. In terms of biological role, confers resistance to fosfomycin and deoxycholate. This is Multidrug resistance protein MdtG from Escherichia coli O81 (strain ED1a).